The chain runs to 168 residues: Lipoprotein signal peptidase (168 aa).

3 helical membrane-spanning segments follow: residues 8 to 28 (LYYLLAFVVILIDQWTKWLVV), 61 to 81 (GQFWLFYLITIVVVVGIVIYI), and 91 to 111 (FGIALGLMLGGALGNFIDRIF). Catalysis depends on residues aspartate 117 and aspartate 135. A helical membrane pass occupies residues 128–148 (FPIFNVADAALTIGVALMFIY).

It belongs to the peptidase A8 family.

The protein localises to the cell membrane. It carries out the reaction Release of signal peptides from bacterial membrane prolipoproteins. Hydrolyzes -Xaa-Yaa-Zaa-|-(S,diacylglyceryl)Cys-, in which Xaa is hydrophobic (preferably Leu), and Yaa (Ala or Ser) and Zaa (Gly or Ala) have small, neutral side chains.. It participates in protein modification; lipoprotein biosynthesis (signal peptide cleavage). Its function is as follows. This protein specifically catalyzes the removal of signal peptides from prolipoproteins. In Anoxybacillus flavithermus (strain DSM 21510 / WK1), this protein is Lipoprotein signal peptidase.